A 206-amino-acid chain; its full sequence is Probable nicotinate-nucleotide adenylyltransferase (206 aa).

Belongs to the NadD family.

The catalysed reaction is nicotinate beta-D-ribonucleotide + ATP + H(+) = deamido-NAD(+) + diphosphate. Its pathway is cofactor biosynthesis; NAD(+) biosynthesis; deamido-NAD(+) from nicotinate D-ribonucleotide: step 1/1. Catalyzes the reversible adenylation of nicotinate mononucleotide (NaMN) to nicotinic acid adenine dinucleotide (NaAD). This Gloeobacter violaceus (strain ATCC 29082 / PCC 7421) protein is Probable nicotinate-nucleotide adenylyltransferase.